A 770-amino-acid chain; its full sequence is Tripartite terminase subunit 1 (770 aa).

The C3H1-type zinc finger occupies 199–227 (CAICFEELCITANQGETLHRRLLGCICDH). Position 675–682 (675–682 (FTSVFHCG)) interacts with ATP.

Belongs to the herpesviridae TRM1 protein family. As to quaternary structure, associates with TRM2 and TRM3 to form the tripartite terminase complex. Interacts with portal protein.

It is found in the host nucleus. Its function is as follows. Component of the molecular motor that translocates viral genomic DNA in empty capsid during DNA packaging. Forms a tripartite terminase complex together with TRM2 and TRM3 in the host cytoplasm. Once the complex reaches the host nucleus, it interacts with the capsid portal vertex. This portal forms a ring in which genomic DNA is translocated into the capsid. TRM1 carries an endonuclease activity that plays an important role for the cleavage of concatemeric viral DNA into unit length genomes. The chain is Tripartite terminase subunit 1 from Varicella-zoster virus (strain Dumas) (HHV-3).